A 201-amino-acid chain; its full sequence is MEIEVIASKRELQGTGASRRLRHAGKVPGIVYGGSTAPVQIELDHNALYHALRKEAFHASVLSLSVDGAKESVLLRDAQWHPYKQQVLHVDFQRVDKDHKIHVKVPLHFLNAEVSPGVKLGGGKPHHIVNELDVQCFPGSLPEFIEVDMGALEVGHSIHANDLVLPAGVELVAHVKQENPAVAVIHAPKGGVEETPAAPAA.

Belongs to the bacterial ribosomal protein bL25 family. CTC subfamily. As to quaternary structure, part of the 50S ribosomal subunit; part of the 5S rRNA/L5/L18/L25 subcomplex. Contacts the 5S rRNA. Binds to the 5S rRNA independently of L5 and L18.

This is one of the proteins that binds to the 5S RNA in the ribosome where it forms part of the central protuberance. The chain is Large ribosomal subunit protein bL25 from Thiobacillus denitrificans (strain ATCC 25259 / T1).